Here is a 211-residue protein sequence, read N- to C-terminus: Ribosomal RNA small subunit methyltransferase G (211 aa).

S-adenosyl-L-methionine contacts are provided by residues Gly73, 126 to 127 (IE), and Arg142.

This sequence belongs to the methyltransferase superfamily. RNA methyltransferase RsmG family.

It is found in the cytoplasm. The catalysed reaction is guanosine(527) in 16S rRNA + S-adenosyl-L-methionine = N(7)-methylguanosine(527) in 16S rRNA + S-adenosyl-L-homocysteine. In terms of biological role, specifically methylates the N7 position of guanine in position 527 of 16S rRNA. This is Ribosomal RNA small subunit methyltransferase G from Methylorubrum extorquens (strain PA1) (Methylobacterium extorquens).